Here is a 200-residue protein sequence, read N- to C-terminus: Recombination protein RecR (200 aa).

The C4-type zinc finger occupies 57-72; sequence CRQCRTLTEQELCPQC. Residues 80–175 form the Toprim domain; sequence TQLCVVEGPV…TATRIAHGVP (96 aa).

This sequence belongs to the RecR family.

Its function is as follows. May play a role in DNA repair. It seems to be involved in an RecBC-independent recombinational process of DNA repair. It may act with RecF and RecO. This is Recombination protein RecR from Pseudomonas entomophila (strain L48).